We begin with the raw amino-acid sequence, 926 residues long: Serine/threonine-protein kinase/endoribonuclease IRE2 (926 aa).

A signal peptide spans 1–34; it reads MASAVRGSRPWPRLGLQLQFAALLLGTLSPQVHT. Residues 35-430 lie on the Lumenal side of the membrane; it reads LRPENLLLVS…TPDSYLGLGP (396 aa). The helical transmembrane segment at 431–451 threads the bilayer; sequence QDLLAASLTAVLLGGWILFVM. Residues 452–926 are Cytoplasmic-facing; that stretch reads RQQQPQVVEK…RRPCPGATGR (475 aa). Residues 478-501 show a composition bias toward polar residues; that stretch reads DAQSLHSGASRRSQKRLQSPSKQA. A disordered region spans residues 478-509; the sequence is DAQSLHSGASRRSQKRLQSPSKQAQPLDDPEA. In terms of domain architecture, Protein kinase spans 520 to 781; it reads FNPKDVLGRG…APQVLAHPFF (262 aa). Residues 526–534 and lysine 548 contribute to the ATP site; that span reads LGRGAGGTF. The Proton acceptor role is filled by aspartate 637. In terms of domain architecture, KEN spans 784-912; that stretch reads RAKQLQFFQD…ESLFLPYYPP (129 aa).

Belongs to the protein kinase superfamily. Ser/Thr protein kinase family. Mg(2+) is required as a cofactor. Post-translationally, autophosphorylated.

The protein resides in the endoplasmic reticulum membrane. The enzyme catalyses L-seryl-[protein] + ATP = O-phospho-L-seryl-[protein] + ADP + H(+). The catalysed reaction is L-threonyl-[protein] + ATP = O-phospho-L-threonyl-[protein] + ADP + H(+). With respect to regulation, the kinase domain is activated by trans-autophosphorylation. Kinase activity is required for activation of the endoribonuclease domain. Its function is as follows. Induces translational repression through 28S ribosomal RNA cleavage in response to ER stress. Pro-apoptotic. Appears to play no role in the unfolded-protein response, unlike closely related proteins. This Homo sapiens (Human) protein is Serine/threonine-protein kinase/endoribonuclease IRE2.